A 792-amino-acid polypeptide reads, in one-letter code: Ubiquitin carboxyl-terminal hydrolase 10 (792 aa).

N-acetylalanine is present on Ala2. Residues 2–99 (ALHNPQYIFG…ILGCTTSKKI (98 aa)) are interaction with p53/TP53. The segment at 6–21 (PQYIFGDFSPDEFNQF) is G3BP1-binding. At Thr24 the chain carries Phosphothreonine. Residues 126–164 (SNAEAETLENDSGAGGLGQRERKKKKKRPPGYYSYLKDG) are disordered. Ser208 and Ser223 each carry phosphoserine. The segment covering 300 to 309 (DEGADLDPAK) has biased composition (basic and acidic residues). Residues 300–323 (DEGADLDPAKPESQSPPAESALSA) form a disordered region. The residue at position 314 (Ser314) is a Phosphoserine. A Phosphoserine; by ATM modification is found at Ser330. Residues 350 to 369 (PMAYVETKCSPPVPSPLASE) form a disordered region. Phosphoserine is present on residues Ser359 and Ser364. In terms of domain architecture, USP spans 409 to 789 (RGLINKGNWC…TAYLLYYRRV (381 aa)). The active-site Nucleophile is Cys418. Residue Ser541 is modified to Phosphoserine. Residues 542 to 580 (PTHEKHSVSNGPRSDLIEDEELEDTGKGSEDEWEQVGPK) are disordered. Phosphothreonine is present on Thr566. Residue Ser570 is modified to Phosphoserine. His743 serves as the catalytic Proton acceptor.

Belongs to the peptidase C19 family. USP10 subfamily. As to quaternary structure, found in a deubiquitination complex with TANK, USP10 and ZC3H12A; this complex inhibits genotoxic stress- or interleukin-1-beta (IL1B)-mediated NF-kappa-B activation by promoting IKBKG or TRAF6 deubiquitination. Interacts with IKBKG; this interaction increases in response to DNA damage. Interacts with TANK; this interaction increases in response to DNA damage. Interacts with TRAF6; this interaction increases in response to DNA damage. Interacts with ZC3H12A; this interaction increases in response to DNA damage. Interacts with G3BP1 (via NTF2 domain) and G3BP2 (via NTF2 domain); inhibiting stress granule formation. Post-translationally, phosphorylated by ATM following DNA damage, leading to stabilization and translocation it to the nucleus. In terms of processing, ubiquitinated. Deubiquitinated by USP13.

It is found in the cytoplasm. It localises to the nucleus. The protein resides in the early endosome. The catalysed reaction is Thiol-dependent hydrolysis of ester, thioester, amide, peptide and isopeptide bonds formed by the C-terminal Gly of ubiquitin (a 76-residue protein attached to proteins as an intracellular targeting signal).. Its activity is regulated as follows. Specifically inhibited by spautin-1 (specific and potent autophagy inhibitor-1), a derivative of MBCQ that binds to USP10 and inhibits deubiquitinase activity. Regulated by PIK3C3/VPS34-containing complexes. Functionally, hydrolase that can remove conjugated ubiquitin from target proteins such as p53/TP53, RPS2/us5, RPS3/us3, RPS10/eS10, BECN1, SNX3 and CFTR. Acts as an essential regulator of p53/TP53 stability: in unstressed cells, specifically deubiquitinates p53/TP53 in the cytoplasm, leading to counteract MDM2 action and stabilize p53/TP53. Following DNA damage, translocates to the nucleus and deubiquitinates p53/TP53, leading to regulate the p53/TP53-dependent DNA damage response. Component of a regulatory loop that controls autophagy and p53/TP53 levels: mediates deubiquitination of BECN1, a key regulator of autophagy, leading to stabilize the PIK3C3/VPS34-containing complexes. In turn, PIK3C3/VPS34-containing complexes regulate USP10 stability, suggesting the existence of a regulatory system by which PIK3C3/VPS34-containing complexes regulate p53/TP53 protein levels via USP10 and USP13. Does not deubiquitinate MDM2. Plays a key role in 40S ribosome subunit recycling when a ribosome has stalled during translation: acts both by inhibiting formation of stress granules, which store stalled translation pre-initiation complexes, and mediating deubiquitination of 40S ribosome subunits. Acts as a negative regulator of stress granules formation by lowering G3BP1 and G3BP2 valence, thereby preventing G3BP1 and G3BP2 ability to undergo liquid-liquid phase separation (LLPS) and assembly of stress granules. Promotes 40S ribosome subunit recycling following ribosome dissociation in response to ribosome stalling by mediating deubiquitination of 40S ribosomal proteins RPS2/us5, RPS3/us3 and RPS10/eS10, thereby preventing their degradation by the proteasome. Part of a ribosome quality control that takes place when ribosomes have stalled during translation initiation (iRQC): USP10 acts by removing monoubiquitination of RPS2/us5 and RPS3/us3, promoting 40S ribosomal subunit recycling. Deubiquitinates CFTR in early endosomes, enhancing its endocytic recycling. Involved in a TANK-dependent negative feedback response to attenuate NF-kappa-B activation via deubiquitinating IKBKG or TRAF6 in response to interleukin-1-beta (IL1B) stimulation or upon DNA damage. Deubiquitinates TBX21 leading to its stabilization. Plays a negative role in the RLR signaling pathway upon RNA virus infection by blocking the RIGI-mediated MAVS activation. Mechanistically, removes the unanchored 'Lys-63'-linked polyubiquitin chains of MAVS to inhibit its aggregation, essential for its activation. The sequence is that of Ubiquitin carboxyl-terminal hydrolase 10 (Usp10) from Mus musculus (Mouse).